Here is a 2251-residue protein sequence, read N- to C-terminus: U3 small nucleolar RNA-associated protein 10 (2251 aa).

Residues 945–983 form an HEAT repeat; it reads VVPLLLTALADAEAAIRLAAIACLAHILAICKYAGDLAK. The next 2 membrane-spanning stretches (helical) occupy residues 962–982 and 1460–1480; these read LAAI…GDLA and LLVD…LLVD.

It belongs to the HEATR1/UTP10 family. As to quaternary structure, component of the ribosomal small subunit (SSU) processome.

It localises to the nucleus. The protein resides in the nucleolus. Its subcellular location is the membrane. Its function is as follows. Involved in nucleolar processing of pre-18S ribosomal RNA. Involved in ribosome biosynthesis. This chain is U3 small nucleolar RNA-associated protein 10, found in Mycosarcoma maydis (Corn smut fungus).